Consider the following 396-residue polypeptide: Acetylornithine aminotransferase 2 (396 aa).

Pyridoxal 5'-phosphate-binding positions include 102–103 (GA) and Phe-134. Residue Arg-137 participates in N(2)-acetyl-L-ornithine binding. Residue 219–222 (DEVQ) participates in pyridoxal 5'-phosphate binding. Lys-248 carries the post-translational modification N6-(pyridoxal phosphate)lysine. Thr-276 provides a ligand contact to pyridoxal 5'-phosphate.

It belongs to the class-III pyridoxal-phosphate-dependent aminotransferase family. ArgD subfamily. In terms of assembly, homodimer. It depends on pyridoxal 5'-phosphate as a cofactor.

It localises to the cytoplasm. The enzyme catalyses N(2)-acetyl-L-ornithine + 2-oxoglutarate = N-acetyl-L-glutamate 5-semialdehyde + L-glutamate. It participates in amino-acid biosynthesis; L-arginine biosynthesis; N(2)-acetyl-L-ornithine from L-glutamate: step 4/4. The polypeptide is Acetylornithine aminotransferase 2 (Bordetella parapertussis (strain 12822 / ATCC BAA-587 / NCTC 13253)).